The sequence spans 558 residues: Potassium-transporting ATPase potassium-binding subunit (558 aa).

A run of 12 helical transmembrane segments spans residues methionine 1–leucine 21, phenylalanine 66–leucine 86, methionine 127–alanine 147, isoleucine 166–methionine 186, isoleucine 245–leucine 265, alanine 281–tryptophan 301, phenylalanine 327–valine 347, leucine 354–glycine 374, valine 377–valine 397, isoleucine 416–methionine 436, isoleucine 482–isoleucine 502, and isoleucine 531–isoleucine 551.

This sequence belongs to the KdpA family. The system is composed of three essential subunits: KdpA, KdpB and KdpC.

The protein resides in the cell membrane. Its function is as follows. Part of the high-affinity ATP-driven potassium transport (or Kdp) system, which catalyzes the hydrolysis of ATP coupled with the electrogenic transport of potassium into the cytoplasm. This subunit binds the extracellular potassium ions and delivers the ions to the membrane domain of KdpB through an intramembrane tunnel. The sequence is that of Potassium-transporting ATPase potassium-binding subunit from Staphylococcus aureus (strain MSSA476).